A 1707-amino-acid polypeptide reads, in one-letter code: Mediator of DNA damage checkpoint protein 1 (1707 aa).

The disordered stretch occupies residues 1–23; it reads MESTQVIDWDAEEEEETELSSGS. The interval 1 to 150 is interaction with CHEK2; that stretch reads MESTQVIDWD…PRSLLTIEKT (150 aa). The segment at 2 to 222 is interaction with the MRN complex; sequence ESTQVIDWDA…SSPFGLGSDT (221 aa). Threonine 4 carries the post-translational modification Phosphothreonine. A compositionally biased stretch (acidic residues) spans 9 to 18; sequence WDAEEEEETE. The region spanning 54-105 is the FHA domain; it reads NVVGRSPDCSVALPFPSISKQHAVIEISAWNKAPILQDCGSLNGTQIVKPPR. A Phosphothreonine modification is found at threonine 146. Residues 166-328 are disordered; it reads ADSEEEGDFP…EERIPVTPPV (163 aa). 2 positions are modified to phosphoserine: serine 168 and serine 176. Residues 183 to 192 show a composition bias toward polar residues; that stretch reads GQRNTASPSA. A phosphoserine mark is found at serine 198 and serine 220. Threonine 222 carries the phosphothreonine modification. Polar residues predominate over residues 252–263; the sequence is ANGTTAGIQAQP. Residues 264–278 show a composition bias toward basic and acidic residues; sequence TEHKLKDTKVKKEAG. Residue serine 298 is modified to Phosphoserine. A Phosphothreonine modification is found at threonine 300. A Phosphoserine modification is found at serine 313. Threonine 315 is subject to Phosphothreonine. At serine 360 the chain carries Phosphoserine. Threonine 362 carries the phosphothreonine modification. Basic and acidic residues predominate over residues 369 to 378; the sequence is ALDVPLERNH. A disordered region spans residues 369 to 398; it reads ALDVPLERNHTPMVINSDTDEEEEEEEEVS. At serine 385 the chain carries Phosphoserine. The segment covering 386 to 397 has biased composition (acidic residues); sequence DTDEEEEEEEEV. Phosphothreonine is present on threonine 387. 5 positions are modified to phosphoserine: serine 398, serine 415, serine 425, serine 438, and serine 442. Disordered stretches follow at residues 417-497, 520-642, 679-699, and 718-746; these read DPGA…PGSH, PGPS…AKEC, LFPC…QTPG, and REQS…HQHL. Residues 425–439 are compositionally biased toward polar residues; it reads SQPQVLVEQSQSASG. Threonine 444 is subject to Phosphothreonine. Serine 461 bears the Phosphoserine mark. Threonine 470 carries the phosphothreonine modification. Serine 492, serine 493, serine 591, serine 593, and serine 595 each carry phosphoserine. The segment covering 580–595 has biased composition (polar residues); sequence VSEQESTLEVRSQSGS. Residues 626 to 642 show a composition bias toward basic and acidic residues; that stretch reads GREREAHVGRTKSAKEC. Residues 719-730 show a composition bias toward basic and acidic residues; sequence EQSETSELHEAH. Serine 735 and serine 750 each carry phosphoserine. The residue at position 769 (lysine 769) is an N6-acetyllysine. 3 stretches are compositionally biased toward basic and acidic residues: residues 778-804, 812-868, and 875-889; these read ADRM…RDVI, TKDR…REWE, and TPDR…HDQK. 2 disordered regions span residues 778–899 and 914–1510; these read ADRM…TLKP and IITG…QETA. Serine 885, serine 929, and serine 962 each carry phosphoserine. Low complexity predominate over residues 968-986; it reads STQSLLTSQSQKQSTPQPL. Serine 991 is subject to Phosphoserine. Polar residues-rich tracts occupy residues 1026–1056, 1068–1086, and 1101–1113; these read PNTT…STRT, QPST…SQVT, and EIQS…QSVT. Phosphothreonine is present on threonine 1056. Phosphoserine is present on residues serine 1104, serine 1126, and serine 1128. A phosphothreonine mark is found at threonine 1132, threonine 1173, and threonine 1234. Polar residues-rich tracts occupy residues 1225–1241, 1265–1281, 1295–1308, and 1317–1326; these read PLTS…TSRA, PSTS…SSQA, VPTT…TSKK, and LVTQGRTYKP. 2 positions are modified to phosphothreonine: threonine 1297 and threonine 1298. At serine 1327 the chain carries Phosphoserine. Positions 1343–1363 are enriched in polar residues; the sequence is PSTSTDHLVTPKVTDQSLTLQ. Phosphothreonine is present on threonine 1352. Serine 1359 bears the Phosphoserine mark. Low complexity predominate over residues 1364 to 1376; sequence SSPLSASPVSSTP. At threonine 1375 the chain carries Phosphothreonine. A compositionally biased stretch (pro residues) spans 1378 to 1393; the sequence is LKPPVPIAQPVTPEPI. Residue lysine 1418 forms a Glycyl lysine isopeptide (Lys-Gly) (interchain with G-Cter in SUMO2) linkage. The span at 1421–1441 shows a compositional bias: low complexity; sequence SALSEPEPQSSASQSSGASEA. Serine 1435, serine 1436, serine 1439, and serine 1443 each carry phosphoserine. Basic and acidic residues predominate over residues 1459-1473; that stretch reads VIKEEPVETEVKEEP. Lysine 1461 is covalently cross-linked (Glycyl lysine isopeptide (Lys-Gly) (interchain with G-Cter in SUMO1); alternate). A Glycyl lysine isopeptide (Lys-Gly) (interchain with G-Cter in SUMO2); alternate cross-link involves residue lysine 1461. Threonine 1480 bears the Phosphothreonine mark. Residues 1481–1493 are compositionally biased toward basic and acidic residues; it reads PEKRKRDHAEEVT. Position 1496 is an N6-acetyllysine (lysine 1496). BRCT domains lie at 1510-1588 and 1609-1700; these read APKV…DYLV and RERR…FVLS.

In terms of assembly, homodimer. Interacts with H2AX, which requires phosphorylation of H2AX on 'Ser-139'. Interacts with the MRN complex, composed of MRE11, RAD50, and NBN. Interacts with CHEK2, which requires ATM-mediated phosphorylation of 'Thr-68' within the FHA domain of CHEK2. Interacts constitutively with the BRCA1-BARD1 complex, SMC1A and TP53BP1. Interacts with ATM and FANCD2, and these interactions are reduced upon DNA damage. Also interacts with the PRKDC complex, composed of XRCC6/KU70, XRCC5/KU80 and PRKDC/XRCC7. This interaction may be required for PRKDC autophosphorylation, which is essential for DNA double strand break (DSB) repair. When phosphorylated by ATM, interacts with RNF8 (via FHA domain). Interacts with CEP164. When phosphorylated, interacts with APTX (via FHA-like domain). Interacts (when phosphorylated) with TOPBP1; promoting TOPBP1 localization to DNA damage sites during mitosis. Interacts (when phosphorylated) with NBN; promoting NBN and MRN complex localization to DNA damage sites. Phosphorylated upon exposure to ionizing radiation (IR), ultraviolet radiation (UV), and hydroxyurea (HU). Phosphorylation in response to IR requires ATM, NBN, and possibly CHEK2. Also phosphorylated during the G2/M phase of the cell cycle and during activation of the mitotic spindle checkpoint. Phosphorylation at Thr-4 by ATM stabilizes and enhances homodimerization via the FHA domain. Phosphorylated at Ser-168 and Ser-198 by CK2 in response to DNA damage during mitosis, promoting interaction with TOPBP1. Phosphorylated by CK2 in response to DNA damage, promoting interaction with NBN and recruitment of the MRN complex to DNA damage sites. Post-translationally, sumoylation at Lys-1461 by PIAS4 following DNA damage promotes ubiquitin-mediated degradation. In terms of processing, ubiquitinated by RNF4, leading to proteasomal degradation; undergoes 'Lys-48'-linked polyubiquitination.

It is found in the nucleus. It localises to the chromosome. Functionally, histone reader protein required for checkpoint-mediated cell cycle arrest in response to DNA damage within both the S phase and G2/M phases of the cell cycle. Specifically recognizes and binds histone H2AX phosphorylated at 'Ser-139', a marker of DNA damage, serving as a scaffold for the recruitment of DNA repair and signal transduction proteins to discrete foci of DNA damage sites. Also required for downstream events subsequent to the recruitment of these proteins. These include phosphorylation and activation of the ATM, CHEK1 and CHEK2 kinases, and stabilization of TP53/p53 and apoptosis. ATM and CHEK2 may also be activated independently by a parallel pathway mediated by TP53BP1. Required for chromosomal stability during mitosis by promoting recruitment of TOPBP1 to DNA double strand breaks (DSBs): TOPBP1 forms filamentous assemblies that bridge MDC1 and tether broken chromosomes during mitosis. Required for the repair of DSBs via homologous recombination by promoting recruitment of NBN component of the MRN complex to DSBs. The sequence is that of Mediator of DNA damage checkpoint protein 1 (Mdc1) from Mus musculus (Mouse).